Consider the following 204-residue polypeptide: Terpene cyclase trt1 (204 aa).

Helical transmembrane passes span 44–64 (FMSI…YPIA), 67–87 (HWAG…FIVA), 103–122 (FARL…HLAL), 132–154 (FFWS…LVCR), and 169–189 (WFYI…FFYF).

It belongs to the paxB family.

The protein localises to the membrane. It participates in secondary metabolite biosynthesis; terpenoid biosynthesis. Functionally, terpene cyclase; part of the gene cluster that mediates the biosynthesis of terretonin, a fungal meroterpenoid that acts as a mycotoxin. The first step of the pathway is the synthesis of 3,5-dimethylorsellinic acid (DMOA) by the polyketide synthase trt4. DMOA is then prenylated into farnesyl-DMOA by the polyprenyl transferase trt2. Methylation by the methyltransferase trt5 then leads to farnesyl-DMOA methyl ester which is further subject to epoxidation by the FAD-dependent monooxygenase trt8 to yield epoxyfarnesyl-DMOA methyl ester. Cyclization of epoxyfarnesyl-DMOA methyl ester by the terpene cyclase trt1 leads to a tetracycle intermediate which is in turn converted to preterretonin. Dehydrogenase trt9 comes next to transform preterretonin to preterrenoid. The FAD-dependent monooxygenase trt3 is then required for the C-hydroxylation at C16 of preterrenoid to yield terrenoid. The cytochrome P450 trt6 catalyzes three successive oxidations to transform terrenoid into an unstable intermediate, which then undergoes the D-ring expansion and unusual rearrangement of the methoxy group to afford the core skeleton of terretonin. Trt14 catalyzes the D-ring expansion of terretonin involving intramolecular methoxy rearrangement as well as the hydrolysis of the expanded D-ring and the methyl ester moiety. Finally, the nonheme iron-dependent dioxygenase trt7 accomplishes the last two oxidation reactions steps to complete the biosynthesis of terretonin. Terretonin C is produced via spontaneous decarboxylation of the terretonin precursor. Another shunt product of the terretonin biosynthesis is dihydrofarnesyl-DMOA, derived from epoxyfarnesyl-DMOA through hydrolysis of the epoxide. The protein is Terpene cyclase trt1 of Aspergillus terreus (strain NIH 2624 / FGSC A1156).